The following is a 428-amino-acid chain: Trigger factor (428 aa).

The region spanning 163–248 (GDTAVIDFEG…VHEIKEKRLP (86 aa)) is the PPIase FKBP-type domain.

Belongs to the FKBP-type PPIase family. Tig subfamily.

Its subcellular location is the cytoplasm. The enzyme catalyses [protein]-peptidylproline (omega=180) = [protein]-peptidylproline (omega=0). Its function is as follows. Involved in protein export. Acts as a chaperone by maintaining the newly synthesized protein in an open conformation. Functions as a peptidyl-prolyl cis-trans isomerase. The polypeptide is Trigger factor (Geobacillus sp. (strain WCH70)).